We begin with the raw amino-acid sequence, 216 residues long: Cytidylate kinase (216 aa).

7–15 is a binding site for ATP; it reads GPSGTGKST.

The protein belongs to the cytidylate kinase family. Type 1 subfamily.

The protein localises to the cytoplasm. The enzyme catalyses CMP + ATP = CDP + ADP. It catalyses the reaction dCMP + ATP = dCDP + ADP. The polypeptide is Cytidylate kinase (Chlamydia trachomatis serovar D (strain ATCC VR-885 / DSM 19411 / UW-3/Cx)).